A 533-amino-acid chain; its full sequence is UDP-glucuronosyltransferase 1A1 (533 aa).

The first 25 residues, 1–25, serve as a signal peptide directing secretion; sequence MAVESQGGRPLVLGLLLCVLGPVVS. N-linked (GlcNAc...) asparagine glycosylation is found at Asn-102, Asn-295, and Asn-347. Residues 491 to 507 form a helical membrane-spanning segment; the sequence is VIGFLLAVVLTVAFITF.

It belongs to the UDP-glycosyltransferase family. As to quaternary structure, homodimer. Homooligomer. Interacts with UGT1A3, UGT1A4, UGT1A6, UGT1A7, UGT1A8, UGT1A9 and UGT1A10 to form heterodimers. Isoform 1 interacts with isoform 2/i2 suggesting that oligomerization is involved in negative regulation of transferase activity by isoform 2. Isoform 1 also interacts with respective i2 isoforms of UGT1A3, UGT1A4, UGT1A6, UGT1A7, UGT1A8, UGT1A9 and UGT1A10. In terms of tissue distribution, expressed in liver, colon and small intestine. Not expressed in kidney, esophagus and skin. Expressed in liver, colon, small intestine and kidney. Not expressed in esophagus and skin.

The protein resides in the endoplasmic reticulum membrane. It localises to the cytoplasm. The protein localises to the perinuclear region. It catalyses the reaction glucuronate acceptor + UDP-alpha-D-glucuronate = acceptor beta-D-glucuronoside + UDP + H(+). The catalysed reaction is 17beta-estradiol + UDP-alpha-D-glucuronate = 17beta-estradiol 3-O-(beta-D-glucuronate) + UDP + H(+). It carries out the reaction 2-hydroxyestrone + UDP-alpha-D-glucuronate = 2-hydroxyestrone 3-O-(beta-D-glucuronate) + UDP + H(+). The enzyme catalyses 2-hydroxy-17beta-estradiol + UDP-alpha-D-glucuronate = 2-hydroxy-17beta-estradiol 3-O-(beta-D-glucuronate) + UDP + H(+). It catalyses the reaction 2-methoxy-17beta-estradiol + UDP-alpha-D-glucuronate = 2-methoxy-17beta-estradiol 3-O-(beta-D-glucuronate) + UDP + H(+). The catalysed reaction is 17alpha-estradiol + UDP-alpha-D-glucuronate = 17alpha-estradiol 3-O-(beta-D-glucuronate) + UDP + H(+). It carries out the reaction 16beta,17beta-estriol + UDP-alpha-D-glucuronate = 16beta,17beta-estriol 16-O-(beta-D-glucuronate) + UDP + H(+). The enzyme catalyses losartan + UDP-alpha-D-glucuronate = losartan-2-N-beta-D-glucuronide + UDP. It catalyses the reaction prunetin + UDP-alpha-D-glucuronate = prunetin-4'-O-beta-D-glucuronide + UDP. The catalysed reaction is SN-38 + UDP-alpha-D-glucuronate = SN-38 O-beta-D-glucuronide + UDP + H(+). It carries out the reaction (4Z,15Z)-bilirubin IXalpha + UDP-alpha-D-glucuronate = (4Z,15Z)-bilirubin IXalpha C12-beta-D-glucuronoside + UDP. The enzyme catalyses (4Z,15Z)-bilirubin IXalpha + UDP-alpha-D-glucuronate = (4Z,15Z)-bilirubin IXalpha C8-beta-D-glucuronoside + UDP. It catalyses the reaction (4Z,15Z)-bilirubin IXalpha C8-beta-D-glucuronoside + UDP-alpha-D-glucuronate = (4Z,15Z)-bilirubin IXalpha C8,C12-beta-D-bisglucuronoside + UDP. The catalysed reaction is (4Z,15Z)-bilirubin IXalpha C12-beta-D-glucuronoside + UDP-alpha-D-glucuronate = (4Z,15Z)-bilirubin IXalpha C8,C12-beta-D-bisglucuronoside + UDP. It carries out the reaction 8-iso-prostaglandin F2alpha + UDP-alpha-D-glucuronate = 8-iso-prostaglandin F2alpha-glucuronide + UDP + H(+). The enzyme catalyses (5Z,8Z,11Z,14Z)-eicosatetraenoate + UDP-alpha-D-glucuronate = O-[(5Z),(8Z),(11Z),(14Z)-eicosatetraenoyl]-beta-D-glucuronate + UDP. It catalyses the reaction 15-hydroxy-(5Z,8Z,11Z,13E)-eicosatetraenoate + UDP-alpha-D-glucuronate = 15-O-(beta-D-glucuronosyl)-(5Z,8Z,11Z,14Z)-eicosatetraenoate + UDP + H(+). The catalysed reaction is 20-hydroxy-(5Z,8Z,11Z,14Z)-eicosatetraenoate + UDP-alpha-D-glucuronate = 20-O-(beta-D-glucuronosyl)-(5Z,8Z,11Z,14Z)-eicosatetraenoate + UDP + H(+). It carries out the reaction prostaglandin B1 + UDP-alpha-D-glucuronate = 15-O-(beta-D-glucuronosyl)-prostaglandin B1 + UDP + H(+). The enzyme catalyses (E)-ferulate + UDP-alpha-D-glucuronate = (E)-4-O-(beta-D-glucuronosyl)-ferulate + UDP + H(+). It catalyses the reaction (E)-ferulate + UDP-alpha-D-glucuronate = (E)-ferulic acid beta-D-glucuronate ester + UDP. Its function is as follows. UDP-glucuronosyltransferase (UGT) that catalyzes phase II biotransformation reactions in which lipophilic substrates are conjugated with glucuronic acid to increase the metabolite's water solubility, thereby facilitating excretion into either the urine or bile. Essential for the elimination and detoxification of drugs, xenobiotics and endogenous compounds. Catalyzes the glucuronidation of endogenous estrogen hormones such as estradiol, estrone and estriol. Involved in the glucuronidation of bilirubin, a degradation product occurring in the normal catabolic pathway that breaks down heme in vertebrates. Involved in the glucuronidation of arachidonic acid (AA) and AA-derived eicosanoids including 15-HETE, 20-HETE, PGB1 and F2-isoprostane (8-iso-PGF2alpha). Involved in the glucuronidation of the phytochemical ferulic acid at the phenolic or the carboxylic acid group. Also catalyzes the glucuronidation the isoflavones genistein, daidzein, glycitein, formononetin, biochanin A and prunetin, which are phytoestrogens with anticancer and cardiovascular properties. Involved in the glucuronidation of the AGTR1 angiotensin receptor antagonist losartan, a drug which can inhibit the effect of angiotensin II. Involved in the biotransformation of 7-ethyl-10-hydroxycamptothecin (SN-38), the pharmacologically active metabolite of the anticancer drug irinotecan. Lacks UGT glucuronidation activity but acts as a negative regulator of isoform 1. The protein is UDP-glucuronosyltransferase 1A1 of Homo sapiens (Human).